A 787-amino-acid chain; its full sequence is Probable basic-leucine zipper transcription factor J (787 aa).

Low complexity predominate over residues asparagine 18–threonine 90. 6 disordered regions span residues asparagine 18–leucine 95, leucine 153–proline 173, leucine 186–threonine 306, aspartate 343–serine 372, leucine 401–asparagine 441, and alanine 473–glutamine 507. Composition is skewed to low complexity over residues leucine 186–isoleucine 223, serine 235–proline 258, asparagine 273–asparagine 305, and asparagine 351–asparagine 366. A compositionally biased stretch (low complexity) spans alanine 473–serine 483. One can recognise a bZIP domain in the interval glutamate 549–leucine 612. Residues lysine 551–lysine 603 are basic motif. A leucine-zipper region spans residues leucine 605–leucine 612. Disordered stretches follow at residues serine 723–threonine 747 and aspartate 763–asparagine 787. Basic and acidic residues predominate over residues aspartate 763–cysteine 778.

Belongs to the bZIP family.

The protein localises to the nucleus. In terms of biological role, probable transcriptional regulator. This is Probable basic-leucine zipper transcription factor J (bzpJ) from Dictyostelium discoideum (Social amoeba).